The primary structure comprises 282 residues: Ribosome biogenesis GTPase A (282 aa).

Positions 14–178 (RREVTEKLKL…LLDTPGILWP (165 aa)) constitute a CP-type G domain. Residues 58–61 (NKAD), 86–87 (NS), 130–135 (NVGKST), and G174 each bind GTP.

This sequence belongs to the TRAFAC class YlqF/YawG GTPase family. MTG1 subfamily. Interacts with ctc. Interacts with the immature 50S ribosome subunit. 2 molecules of rbgA bind to one 50S subunit.

It localises to the cytoplasm. In terms of biological role, essential protein that is required for a late step of 50S ribosomal subunit assembly. Has GTPase activity that is stimulated by interaction with the immature 50S ribosome subunit. Binds to the 23S rRNA. Required for the association of ribosomal proteins rplP and rpmA with the large subunit. The sequence is that of Ribosome biogenesis GTPase A (rbgA) from Bacillus spizizenii (strain ATCC 23059 / NRRL B-14472 / W23) (Bacillus subtilis subsp. spizizenii).